The following is an 83-amino-acid chain: Putative defensin-like protein 150 (83 aa).

An N-terminal signal peptide occupies residues 1–25 (MMGKHIQLSFAILIMFTIFVLGAVG). Intrachain disulfides connect Cys-35/Cys-83, Cys-44/Cys-64, Cys-49/Cys-77, and Cys-53/Cys-79.

It belongs to the DEFL family.

The protein localises to the secreted. This Arabidopsis thaliana (Mouse-ear cress) protein is Putative defensin-like protein 150 (LCR32).